We begin with the raw amino-acid sequence, 206 residues long: Probable glutathione S-transferase 6 (206 aa).

Residues 2 to 79 (VHYKLVYFPL…YLAREFGIAG (78 aa)) form the GST N-terminal domain. Glutathione contacts are provided by residues tyrosine 8, tryptophan 39, lysine 43, 49-51 (GQL), and 63-64 (QS). One can recognise a GST C-terminal domain in the interval 81–206 (NDTEAAEVDA…YIANRPDYPF (126 aa)).

Belongs to the GST superfamily. Sigma family.

The catalysed reaction is RX + glutathione = an S-substituted glutathione + a halide anion + H(+). Functionally, conjugation of reduced glutathione to a wide number of exogenous and endogenous hydrophobic electrophiles. The sequence is that of Probable glutathione S-transferase 6 (gst-6) from Caenorhabditis elegans.